A 127-amino-acid chain; its full sequence is Small ribosomal subunit protein uS11 (127 aa).

Belongs to the universal ribosomal protein uS11 family. Part of the 30S ribosomal subunit. Interacts with proteins S7 and S18. Binds to IF-3.

Its function is as follows. Located on the platform of the 30S subunit, it bridges several disparate RNA helices of the 16S rRNA. Forms part of the Shine-Dalgarno cleft in the 70S ribosome. This is Small ribosomal subunit protein uS11 from Rickettsia canadensis (strain McKiel).